The sequence spans 241 residues: MAPK phosphothreonine lyase (241 aa).

His106 functions as the Proton donor in the catalytic mechanism. Lys136 serves as the catalytic Proton acceptor.

Belongs to the phosphothreonine lyase family.

The protein localises to the secreted. Its function is as follows. Secreted effector that irreversibly inactivates host MAP kinases by catalyzing the dephosphorylation of the phosphothreonine residue in the pT-X-pY motif present in MAPKs, via a beta-elimination reaction leading to a dehydrobutyrine residue. In Salmonella enteritidis, this protein is MAPK phosphothreonine lyase (spvC).